Reading from the N-terminus, the 956-residue chain is Run domain Beclin-1-interacting and cysteine-rich domain-containing protein (956 aa).

The RUN domain maps to 49 to 190; that stretch reads WSKYGGLERL…PRLLAQIDAS (142 aa). The interval 50 to 181 is interaction with PIK3C3; that stretch reads SKYGGLERLC…CLEAVEQNNP (132 aa). Residue Ser198 is modified to Phosphoserine. The tract at residues 205 to 437 is interaction with YWHAB; it reads SQSLTALPGS…ITIIVEDPIA (233 aa). Residues 233–242 show a composition bias toward low complexity; it reads SLQSMPQSSH. The interval 233–423 is disordered; sequence SLQSMPQSSH…TNIASRGAAG (191 aa). A phosphoserine mark is found at Ser250 and Ser268. Positions 270–319 are enriched in polar residues; sequence AETQTTPAPLPSDSTLAQDSPLTAQEMSDSTLTSPLEASWVSSQNDSPSD. The segment at 302–585 is interaction with UVRAG; it reads TSPLEASWVS…DLEIQDADIR (284 aa). Over residues 339 to 371 the composition is skewed to low complexity; the sequence is ASCESHSSNGESSSSHLFSSSSSQKLESAASSL. A compositionally biased stretch (polar residues) spans 379–395; sequence QSQAGSVLRRSSFSEGQ. Phosphoserine occurs at positions 390, 412, 513, and 547. The tract at residues 490-542 is interaction with BECN1; the sequence is AIELMKCNMMSQCLEEEEVEEEDSDREIQELKQKIRLRRQQIRTKNLLPAYRE. The segment covering 547 to 566 has biased composition (low complexity); sequence SFRVTSSSSQFSSRDSTQLS. The interval 547–579 is disordered; that stretch reads SFRVTSSSSQFSSRDSTQLSESGSAEDADDLEI. The interaction with CYBA stretch occupies residues 552–609; it reads SSSSQFSSRDSTQLSESGSAEDADDLEIQDADIRRSAVSNGKSSFSQNLSHCFLHSTS. The segment covering 570-579 has biased composition (acidic residues); it reads SAEDADDLEI. Ser655 carries the phosphoserine modification. Residues 656–744 form an interaction with CARD9 region; the sequence is PDDGQHADIY…HENAQMVVPS (89 aa). An interaction with Rab7 region spans residues 705 to 956; the sequence is CAGCGIRTDP…ALEATVLETT (252 aa).

As to quaternary structure, associates with PI3K (PI3KC3/PI3K-III/class III phosphatidylinositol 3-kinase) complex II (PI3KC3-C2) in which the core composed of the catalytic subunit PIK3C3, the regulatory subunit PIK3R4 and BECN1 is associated with UVRAG; in the complex interacts directly with PI3KC3 and UVRAG. Interacts with Rab7 (RAB7A or RAB7B) (GTP-bound form); Rab7 and UVRAG compete for RUBCN binding; can interact simultaneously with Rab7 and the PI3K complex. Interacts with CYBA and CYBB; indicative for the association with the CYBA:CYBB NADPH oxidase heterodimer. Interacts with NOX4 and probably associates with the CYBA:NOX4 complex. Interacts with YWHAB and CARD9 in a competitive and stimulation-dependent manner; RUBCN exchanges interaction from YWHAB to CARD9 upon stimulation with beta-1,3-glucan.

It localises to the late endosome. The protein localises to the lysosome. It is found in the early endosome. Its function is as follows. Inhibits PIK3C3 activity; under basal conditions negatively regulates PI3K complex II (PI3KC3-C2) function in autophagy. Negatively regulates endosome maturation and degradative endocytic trafficking and impairs autophagosome maturation process. Can sequester UVRAG from association with a class C Vps complex (possibly the HOPS complex) and negatively regulates Rab7 activation. Involved in regulation of pathogen-specific host defense of activated macrophages. Following bacterial infection promotes NADH oxidase activity by association with CYBA thereby affecting TLR2 signaling and probably other TLR-NOX pathways. Stabilizes the CYBA:CYBB NADPH oxidase heterodimer, increases its association with TLR2 and its phagosome trafficking to induce antimicrobial burst of ROS and production of inflammatory cytokines. Following fungal or viral infection (implicating CLEC7A (dectin-1)-mediated myeloid cell activation or RIGI-dependent sensing of RNA viruses) negatively regulates pro-inflammatory cytokine production by association with CARD9 and sequestering it from signaling complexes. The sequence is that of Run domain Beclin-1-interacting and cysteine-rich domain-containing protein from Mus musculus (Mouse).